Consider the following 560-residue polypeptide: Nuclear hormone receptor family member nhr-8 (560 aa).

Residues M1–P21 form a disordered region. The nuclear receptor DNA-binding region spans G23–D98. 2 consecutive NR C4-type zinc fingers follow at residues C26–C46 and C62–C86. Residues D336–E560 enclose the NR LBD domain.

It belongs to the nuclear hormone receptor family.

The protein resides in the nucleus. In terms of biological role, orphan nuclear receptor. The protein is Nuclear hormone receptor family member nhr-8 (nhr-8) of Caenorhabditis elegans.